Reading from the N-terminus, the 399-residue chain is Acetylornithine aminotransferase (399 aa).

Pyridoxal 5'-phosphate-binding positions include 99-100 (GA) and Phe-132. Arg-135 lines the N(2)-acetyl-L-ornithine pocket. 217 to 220 (DEVQ) lines the pyridoxal 5'-phosphate pocket. Lys-246 bears the N6-(pyridoxal phosphate)lysine mark. Thr-274 provides a ligand contact to N(2)-acetyl-L-ornithine. Pyridoxal 5'-phosphate is bound at residue Thr-275.

The protein belongs to the class-III pyridoxal-phosphate-dependent aminotransferase family. ArgD subfamily. As to quaternary structure, homodimer. It depends on pyridoxal 5'-phosphate as a cofactor.

It is found in the cytoplasm. The catalysed reaction is N(2)-acetyl-L-ornithine + 2-oxoglutarate = N-acetyl-L-glutamate 5-semialdehyde + L-glutamate. Its pathway is amino-acid biosynthesis; L-arginine biosynthesis; N(2)-acetyl-L-ornithine from L-glutamate: step 4/4. In Agrobacterium fabrum (strain C58 / ATCC 33970) (Agrobacterium tumefaciens (strain C58)), this protein is Acetylornithine aminotransferase.